A 353-amino-acid polypeptide reads, in one-letter code: Photosystem II D2 protein (353 aa).

Thr2 bears the N-acetylthreonine mark. Thr2 carries the phosphothreonine modification. The helical transmembrane segment at 41-61 (CAYFSLGGWFTGTTFVTSWYT) threads the bilayer. Chlorophyll a is bound at residue His118. A helical transmembrane segment spans residues 125–141 (GFMLRQFELARSVQLRP). Pheophytin a is bound by residues Gln130 and Asn143. The helical transmembrane segment at 153–166 (VFVSVFLIYPLGQS) threads the bilayer. His198 contributes to the chlorophyll a binding site. A helical transmembrane segment spans residues 208 to 228 (AALLCAIHGATVENTLFEDGD). A plastoquinone-binding residues include His215 and Phe262. Position 215 (His215) interacts with Fe cation. Fe cation is bound at residue His269. A helical membrane pass occupies residues 279-295 (GLWMSAIGVVGLALNLR).

This sequence belongs to the reaction center PufL/M/PsbA/D family. In terms of assembly, PSII is composed of 1 copy each of membrane proteins PsbA, PsbB, PsbC, PsbD, PsbE, PsbF, PsbH, PsbI, PsbJ, PsbK, PsbL, PsbM, PsbT, PsbX, PsbY, PsbZ, Psb30/Ycf12, at least 3 peripheral proteins of the oxygen-evolving complex and a large number of cofactors. It forms dimeric complexes. It depends on The D1/D2 heterodimer binds P680, chlorophylls that are the primary electron donor of PSII, and subsequent electron acceptors. It shares a non-heme iron and each subunit binds pheophytin, quinone, additional chlorophylls, carotenoids and lipids. There is also a Cl(-1) ion associated with D1 and D2, which is required for oxygen evolution. The PSII complex binds additional chlorophylls, carotenoids and specific lipids. as a cofactor.

The protein localises to the plastid. The protein resides in the chloroplast thylakoid membrane. It catalyses the reaction 2 a plastoquinone + 4 hnu + 2 H2O = 2 a plastoquinol + O2. Functionally, photosystem II (PSII) is a light-driven water:plastoquinone oxidoreductase that uses light energy to abstract electrons from H(2)O, generating O(2) and a proton gradient subsequently used for ATP formation. It consists of a core antenna complex that captures photons, and an electron transfer chain that converts photonic excitation into a charge separation. The D1/D2 (PsbA/PsbD) reaction center heterodimer binds P680, the primary electron donor of PSII as well as several subsequent electron acceptors. D2 is needed for assembly of a stable PSII complex. The chain is Photosystem II D2 protein from Physcomitrium patens (Spreading-leaved earth moss).